The chain runs to 199 residues: Molybdenum cofactor guanylyltransferase (199 aa).

GTP is bound by residues 12 to 14 (LAG), Lys25, Asn53, Asp71, and Asp101. Asp101 lines the Mg(2+) pocket.

It belongs to the MobA family. In terms of assembly, monomer. Mg(2+) serves as cofactor.

Its subcellular location is the cytoplasm. It catalyses the reaction Mo-molybdopterin + GTP + H(+) = Mo-molybdopterin guanine dinucleotide + diphosphate. Functionally, transfers a GMP moiety from GTP to Mo-molybdopterin (Mo-MPT) cofactor (Moco or molybdenum cofactor) to form Mo-molybdopterin guanine dinucleotide (Mo-MGD) cofactor. The sequence is that of Molybdenum cofactor guanylyltransferase from Cupriavidus pinatubonensis (strain JMP 134 / LMG 1197) (Cupriavidus necator (strain JMP 134)).